We begin with the raw amino-acid sequence, 105 residues long: Nitrogen fixation nifHD region GlnB-like protein 1 (105 aa).

The protein belongs to the P(II) protein family.

Its function is as follows. Could be involved in the regulation of nitrogen fixation. This is Nitrogen fixation nifHD region GlnB-like protein 1 (glnBA) from Methanothermobacter marburgensis (strain ATCC BAA-927 / DSM 2133 / JCM 14651 / NBRC 100331 / OCM 82 / Marburg) (Methanobacterium thermoautotrophicum).